The sequence spans 526 residues: Outer capsid protein VP5 (526 aa).

An involved in membrane permeabilization region spans residues 1 to 42 (MGKVIRSLNRFGKKVGNALTSNTAKKIYSTIGKAADEFLESE).

It belongs to the orbivirus VP5 family.

The protein resides in the virion. Its function is as follows. VP5 protein is one of the two proteins (with VP2) which constitute the virus particle outer capsid. Acts as a membrane permeabilization protein that mediates release of viral particles from endosomal compartments into the cytoplasm. Permeabilization activity is probably negatively regulated by VP2 and is triggered by endosomal degradation of VP2 and exposure to low pH. The protein is Outer capsid protein VP5 (Segment-6) of Bluetongue virus 1 (isolate South Africa) (BTV 1).